Here is a 471-residue protein sequence, read N- to C-terminus: Ribulose bisphosphate carboxylase large chain (471 aa).

The substrate site is built by Asn115 and Thr165. Lys167 functions as the Proton acceptor in the catalytic mechanism. Lys169 lines the substrate pocket. The Mg(2+) site is built by Lys193, Asp195, and Glu196. Lys193 carries the N6-carboxylysine modification. Catalysis depends on His286, which acts as the Proton acceptor. Residues Arg287, His319, and Ser371 each contribute to the substrate site.

This sequence belongs to the RuBisCO large chain family. Type I subfamily. As to quaternary structure, heterohexadecamer of 8 large chains and 8 small chains. Mg(2+) is required as a cofactor.

Its subcellular location is the carboxysome. It catalyses the reaction 2 (2R)-3-phosphoglycerate + 2 H(+) = D-ribulose 1,5-bisphosphate + CO2 + H2O. It carries out the reaction D-ribulose 1,5-bisphosphate + O2 = 2-phosphoglycolate + (2R)-3-phosphoglycerate + 2 H(+). RuBisCO catalyzes two reactions: the carboxylation of D-ribulose 1,5-bisphosphate, the primary event in carbon dioxide fixation, as well as the oxidative fragmentation of the pentose substrate in the photorespiration process. Both reactions occur simultaneously and in competition at the same active site. This Synechococcus sp. (strain RCC307) protein is Ribulose bisphosphate carboxylase large chain.